The following is a 104-amino-acid chain: Phosphoribosyl-ATP pyrophosphatase (104 aa).

The protein belongs to the PRA-PH family.

The protein resides in the cytoplasm. The catalysed reaction is 1-(5-phospho-beta-D-ribosyl)-ATP + H2O = 1-(5-phospho-beta-D-ribosyl)-5'-AMP + diphosphate + H(+). Its pathway is amino-acid biosynthesis; L-histidine biosynthesis; L-histidine from 5-phospho-alpha-D-ribose 1-diphosphate: step 2/9. This chain is Phosphoribosyl-ATP pyrophosphatase, found in Streptococcus sanguinis (strain SK36).